A 149-amino-acid chain; its full sequence is Nucleoside diphosphate kinase (149 aa).

Lysine 9, phenylalanine 57, arginine 85, threonine 91, arginine 102, and asparagine 112 together coordinate ATP. Histidine 115 serves as the catalytic Pros-phosphohistidine intermediate.

The protein belongs to the NDK family. As to quaternary structure, homotetramer. Mg(2+) serves as cofactor.

Its subcellular location is the cytoplasm. The enzyme catalyses a 2'-deoxyribonucleoside 5'-diphosphate + ATP = a 2'-deoxyribonucleoside 5'-triphosphate + ADP. The catalysed reaction is a ribonucleoside 5'-diphosphate + ATP = a ribonucleoside 5'-triphosphate + ADP. Its function is as follows. Major role in the synthesis of nucleoside triphosphates other than ATP. The ATP gamma phosphate is transferred to the NDP beta phosphate via a ping-pong mechanism, using a phosphorylated active-site intermediate. The protein is Nucleoside diphosphate kinase of Desulfitobacterium hafniense (strain Y51).